Here is a 334-residue protein sequence, read N- to C-terminus: Large ribosomal subunit protein uL3 (334 aa).

The span at 1–10 (MGMKKNRPRR) shows a compositional bias: basic residues. The interval 1-21 (MGMKKNRPRRGSLAFSPRKRA) is disordered.

This sequence belongs to the universal ribosomal protein uL3 family. As to quaternary structure, part of the 50S ribosomal subunit. Forms a cluster with proteins L14 and L24e.

Its function is as follows. One of the primary rRNA binding proteins, it binds directly near the 3'-end of the 23S rRNA, where it nucleates assembly of the 50S subunit. The chain is Large ribosomal subunit protein uL3 from Methanococcus vannielii (strain ATCC 35089 / DSM 1224 / JCM 13029 / OCM 148 / SB).